The sequence spans 66 residues: Large ribosomal subunit protein uL29 (66 aa).

Belongs to the universal ribosomal protein uL29 family.

This chain is Large ribosomal subunit protein uL29, found in Allorhizobium ampelinum (strain ATCC BAA-846 / DSM 112012 / S4) (Agrobacterium vitis (strain S4)).